The following is a 40-amino-acid chain: Photosystem II reaction center protein X (40 aa).

A helical transmembrane segment spans residues 10-30 (FFYSILFGAIVLGLLGGGFIF).

The protein belongs to the PsbX family. Type 1 subfamily. In terms of assembly, PSII is composed of 1 copy each of membrane proteins PsbA, PsbB, PsbC, PsbD, PsbE, PsbF, PsbH, PsbI, PsbJ, PsbK, PsbL, PsbM, PsbT, PsbX, PsbY, PsbZ, Psb30/Ycf12, peripheral proteins PsbO, CyanoQ (PsbQ), PsbU, PsbV and a large number of cofactors. It forms dimeric complexes.

It is found in the cellular thylakoid membrane. Functionally, involved in the binding and/or turnover of quinones at the Q(B) site of photosystem II (PSII). PSII is a light-driven water plastoquinone oxidoreductase, using light energy to abstract electrons from H(2)O, generating a proton gradient subsequently used for ATP formation. In Acaryochloris marina (strain MBIC 11017), this protein is Photosystem II reaction center protein X.